The primary structure comprises 456 residues: ATP synthase subunit beta (456 aa).

135 to 142 (GGAGVGKT) provides a ligand contact to ATP.

The protein belongs to the ATPase alpha/beta chains family. As to quaternary structure, F-type ATPases have 2 components, CF(1) - the catalytic core - and CF(0) - the membrane proton channel. CF(1) has five subunits: alpha(3), beta(3), gamma(1), delta(1), epsilon(1). CF(0) has four main subunits: a(1), b(1), b'(1) and c(9-12).

The protein localises to the cellular thylakoid membrane. It carries out the reaction ATP + H2O + 4 H(+)(in) = ADP + phosphate + 5 H(+)(out). In terms of biological role, produces ATP from ADP in the presence of a proton gradient across the membrane. The catalytic sites are hosted primarily by the beta subunits. The sequence is that of ATP synthase subunit beta (atpD) from Acaryochloris marina (strain MBIC 11017).